Reading from the N-terminus, the 433-residue chain is Histidinol dehydrogenase (433 aa).

NAD(+)-binding residues include Tyr-129, Gln-191, and Asn-214. The substrate site is built by Ser-237, Gln-259, and His-262. Zn(2+)-binding residues include Gln-259 and His-262. Residues Glu-326 and His-327 each act as proton acceptor in the active site. His-327, Asp-360, Glu-414, and His-419 together coordinate substrate. Residue Asp-360 participates in Zn(2+) binding. His-419 provides a ligand contact to Zn(2+).

It belongs to the histidinol dehydrogenase family. It depends on Zn(2+) as a cofactor.

It catalyses the reaction L-histidinol + 2 NAD(+) + H2O = L-histidine + 2 NADH + 3 H(+). It functions in the pathway amino-acid biosynthesis; L-histidine biosynthesis; L-histidine from 5-phospho-alpha-D-ribose 1-diphosphate: step 9/9. Its function is as follows. Catalyzes the sequential NAD-dependent oxidations of L-histidinol to L-histidinaldehyde and then to L-histidine. The sequence is that of Histidinol dehydrogenase from Methanosarcina barkeri (strain Fusaro / DSM 804).